We begin with the raw amino-acid sequence, 881 residues long: Valine--tRNA ligase (881 aa).

The 'HIGH' region motif lies at 49-59 (PNVTGKLHLGH). A 'KMSKS' region motif is present at residues 526-530 (KMSKS). Lys529 contributes to the ATP binding site. The stretch at 810 to 881 (LADLINLDEE…VRQRLADLEK (72 aa)) forms a coiled coil.

This sequence belongs to the class-I aminoacyl-tRNA synthetase family. ValS type 1 subfamily. As to quaternary structure, monomer.

It localises to the cytoplasm. It catalyses the reaction tRNA(Val) + L-valine + ATP = L-valyl-tRNA(Val) + AMP + diphosphate. In terms of biological role, catalyzes the attachment of valine to tRNA(Val). As ValRS can inadvertently accommodate and process structurally similar amino acids such as threonine, to avoid such errors, it has a 'posttransfer' editing activity that hydrolyzes mischarged Thr-tRNA(Val) in a tRNA-dependent manner. This is Valine--tRNA ligase from Bacillus thuringiensis subsp. konkukian (strain 97-27).